The following is a 429-amino-acid chain: GTPase Obg (429 aa).

Residues 1 to 158 (MFYDTAKIYV…RWLLLELKLL (158 aa)) enclose the Obg domain. In terms of domain architecture, OBG-type G spans 159–329 (ADVGLVGYPN…LIYRLWEIIS (171 aa)). Residues 165–172 (GYPNAGKS), 190–194 (FTTLT), 212–215 (DIPG), 282–285 (NKMD), and 310–312 (SAL) contribute to the GTP site. 2 residues coordinate Mg(2+): Ser172 and Thr192. In terms of domain architecture, OCT spans 344-421 (IKEQPEEGFV…IGKFEFYFVD (78 aa)).

The protein belongs to the TRAFAC class OBG-HflX-like GTPase superfamily. OBG GTPase family. Monomer. Requires Mg(2+) as cofactor.

The protein resides in the cytoplasm. In terms of biological role, an essential GTPase which binds GTP, GDP and possibly (p)ppGpp with moderate affinity, with high nucleotide exchange rates and a fairly low GTP hydrolysis rate. Plays a role in control of the cell cycle, stress response, ribosome biogenesis and in those bacteria that undergo differentiation, in morphogenesis control. This chain is GTPase Obg, found in Carboxydothermus hydrogenoformans (strain ATCC BAA-161 / DSM 6008 / Z-2901).